A 465-amino-acid polypeptide reads, in one-letter code: Methylenetetrahydrofolate--tRNA-(uracil-5-)-methyltransferase TrmFO (465 aa).

Residue 3-8 (GAGLAG) coordinates FAD.

It belongs to the MnmG family. TrmFO subfamily. FAD serves as cofactor.

The protein resides in the cytoplasm. It catalyses the reaction uridine(54) in tRNA + (6R)-5,10-methylene-5,6,7,8-tetrahydrofolate + NADH + H(+) = 5-methyluridine(54) in tRNA + (6S)-5,6,7,8-tetrahydrofolate + NAD(+). It carries out the reaction uridine(54) in tRNA + (6R)-5,10-methylene-5,6,7,8-tetrahydrofolate + NADPH + H(+) = 5-methyluridine(54) in tRNA + (6S)-5,6,7,8-tetrahydrofolate + NADP(+). Its function is as follows. Catalyzes the folate-dependent formation of 5-methyl-uridine at position 54 (M-5-U54) in all tRNAs. The protein is Methylenetetrahydrofolate--tRNA-(uracil-5-)-methyltransferase TrmFO of Bradyrhizobium sp. (strain BTAi1 / ATCC BAA-1182).